The chain runs to 100 residues: Cell division topological specificity factor (100 aa).

It belongs to the MinE family.

Functionally, prevents the cell division inhibition by proteins MinC and MinD at internal division sites while permitting inhibition at polar sites. This ensures cell division at the proper site by restricting the formation of a division septum at the midpoint of the long axis of the cell. This is Cell division topological specificity factor from Blochmanniella floridana.